The sequence spans 329 residues: GTPase Obg (329 aa).

The Obg domain maps to 1-159 (MQFIDQARIT…WFLQLELKLL (159 aa)). The 169-residue stretch at 160 to 328 (AEVGIIGLPN…LLAQVWKELG (169 aa)) folds into the OBG-type G domain. Residues 166–173 (GLPNAGKS), 191–195 (FTTLV), 213–216 (DIPG), 280–283 (NKQE), and 309–311 (SAA) each bind ATP. The Mg(2+) site is built by Ser173 and Thr193.

The protein belongs to the TRAFAC class OBG-HflX-like GTPase superfamily. OBG GTPase family. Monomer. Mg(2+) is required as a cofactor.

It localises to the cytoplasm. Its function is as follows. An essential GTPase which binds GTP, GDP and possibly (p)ppGpp with moderate affinity, with high nucleotide exchange rates and a fairly low GTP hydrolysis rate. Plays a role in control of the cell cycle, stress response, ribosome biogenesis and in those bacteria that undergo differentiation, in morphogenesis control. In Prochlorococcus marinus (strain MIT 9303), this protein is GTPase Obg.